A 415-amino-acid chain; its full sequence is Gamma-glutamyl phosphate reductase (415 aa).

It belongs to the gamma-glutamyl phosphate reductase family.

It localises to the cytoplasm. It carries out the reaction L-glutamate 5-semialdehyde + phosphate + NADP(+) = L-glutamyl 5-phosphate + NADPH + H(+). Its pathway is amino-acid biosynthesis; L-proline biosynthesis; L-glutamate 5-semialdehyde from L-glutamate: step 2/2. Its function is as follows. Catalyzes the NADPH-dependent reduction of L-glutamate 5-phosphate into L-glutamate 5-semialdehyde and phosphate. The product spontaneously undergoes cyclization to form 1-pyrroline-5-carboxylate. In Bacillus cereus (strain 03BB102), this protein is Gamma-glutamyl phosphate reductase.